We begin with the raw amino-acid sequence, 310 residues long: Olfactory receptor 2A4 (310 aa).

Residues 1-24 lie on the Extracellular side of the membrane; it reads MGDNITSIREFLLLGFPVGPRIQM. The N-linked (GlcNAc...) asparagine glycan is linked to Asn4. The chain crosses the membrane as a helical span at residues 25–48; it reads LLFGLFSLFYVFTLLGNGTILGLI. Topologically, residues 49 to 56 are cytoplasmic; sequence SLDSRLHA. The chain crosses the membrane as a helical span at residues 57-78; sequence PMYFFLSHLAVVDIAYACNTVP. Over 79 to 99 the chain is Extracellular; it reads RMLVNLLHPAKPISFAGRMMQ. The chain crosses the membrane as a helical span at residues 100–119; it reads TFLFSTFAVTECLLLVVMSY. The Cytoplasmic portion of the chain corresponds to 120 to 138; the sequence is DLYVAICHPLRYLAIMTWR. A helical membrane pass occupies residues 139–157; sequence VCITLAVTSWTTGVLLSLI. Residues 158–194 lie on the Extracellular side of the membrane; it reads HLVLLLPLPFCRPQKIYHFFCEILAVLKLACADTHIN. Residues 195–218 traverse the membrane as a helical segment; sequence ENMVLAGAISGLVGPLSTIVVSYM. Residues 219–235 lie on the Cytoplasmic side of the membrane; sequence CILCAILQIQSREVQRK. Residues 236–258 form a helical membrane-spanning segment; it reads AFRTCFSHLCVIGLVYGTAIIMY. At 259–271 the chain is on the extracellular side; it reads VGPRYGNPKEQKK. The chain crosses the membrane as a helical span at residues 272 to 291; the sequence is YLLLFHSLFNPMLNPLICSL. Topologically, residues 292–310 are cytoplasmic; the sequence is RNSEVKNTLKRVLGVERAL.

This sequence belongs to the G-protein coupled receptor 1 family.

The protein localises to the cell membrane. Functionally, odorant receptor. This chain is Olfactory receptor 2A4 (OR2A4), found in Homo sapiens (Human).